Here is a 429-residue protein sequence, read N- to C-terminus: Glutamate-1-semialdehyde 2,1-aminomutase 1 (429 aa).

At K267 the chain carries N6-(pyridoxal phosphate)lysine.

This sequence belongs to the class-III pyridoxal-phosphate-dependent aminotransferase family. HemL subfamily. Homodimer. Pyridoxal 5'-phosphate serves as cofactor.

The protein resides in the cytoplasm. The enzyme catalyses (S)-4-amino-5-oxopentanoate = 5-aminolevulinate. It participates in porphyrin-containing compound metabolism; protoporphyrin-IX biosynthesis; 5-aminolevulinate from L-glutamyl-tRNA(Glu): step 2/2. This is Glutamate-1-semialdehyde 2,1-aminomutase 1 from Bacillus velezensis (strain DSM 23117 / BGSC 10A6 / LMG 26770 / FZB42) (Bacillus amyloliquefaciens subsp. plantarum).